Reading from the N-terminus, the 214-residue chain is Probable transaldolase (214 aa).

Lys-83 functions as the Schiff-base intermediate with substrate in the catalytic mechanism.

Belongs to the transaldolase family. Type 3B subfamily.

It is found in the cytoplasm. The enzyme catalyses D-sedoheptulose 7-phosphate + D-glyceraldehyde 3-phosphate = D-erythrose 4-phosphate + beta-D-fructose 6-phosphate. Its pathway is carbohydrate degradation; pentose phosphate pathway; D-glyceraldehyde 3-phosphate and beta-D-fructose 6-phosphate from D-ribose 5-phosphate and D-xylulose 5-phosphate (non-oxidative stage): step 2/3. Functionally, transaldolase is important for the balance of metabolites in the pentose-phosphate pathway. This Geobacter metallireducens (strain ATCC 53774 / DSM 7210 / GS-15) protein is Probable transaldolase.